The sequence spans 159 residues: Phosphopantetheine adenylyltransferase (159 aa).

Thr-10 serves as a coordination point for substrate. ATP is bound by residues 10 to 11 and His-18; that span reads TF. Residues Lys-42, Met-74, and Arg-88 each contribute to the substrate site. ATP-binding positions include 89-91, Glu-99, and 124-130; these read GLR and WSFISSS.

Belongs to the bacterial CoaD family. As to quaternary structure, homohexamer. Mg(2+) is required as a cofactor.

The protein resides in the cytoplasm. It catalyses the reaction (R)-4'-phosphopantetheine + ATP + H(+) = 3'-dephospho-CoA + diphosphate. It participates in cofactor biosynthesis; coenzyme A biosynthesis; CoA from (R)-pantothenate: step 4/5. Reversibly transfers an adenylyl group from ATP to 4'-phosphopantetheine, yielding dephospho-CoA (dPCoA) and pyrophosphate. This Pectobacterium carotovorum subsp. carotovorum (strain PC1) protein is Phosphopantetheine adenylyltransferase.